We begin with the raw amino-acid sequence, 87 residues long: Small ribosomal subunit protein eS21 (87 aa).

Belongs to the eukaryotic ribosomal protein eS21 family. As to quaternary structure, component of the small ribosomal subunit. Mature ribosomes consist of a small (40S) and a large (60S) subunit. The 40S subunit contains about 33 different proteins and 1 molecule of RNA (18S). The 60S subunit contains about 49 different proteins and 3 molecules of RNA (25S, 5.8S and 5S).

It localises to the cytoplasm. Functionally, required for the processing of the 20S rRNA-precursor to mature 18S rRNA in a late step of the maturation of 40S ribosomal subunits. Has a physiological role leading to 18S rRNA stability. The polypeptide is Small ribosomal subunit protein eS21 (RPS21) (Candida glabrata (strain ATCC 2001 / BCRC 20586 / JCM 3761 / NBRC 0622 / NRRL Y-65 / CBS 138) (Yeast)).